The primary structure comprises 453 residues: Lysine histidine transporter-like 1 (453 aa).

Residues 1–44 lie on the Cytoplasmic side of the membrane; that stretch reads MYIQMTDGVPPPPEQSSLDHRIDELERQKEIDDWLPITSSRNAK. 2 consecutive transmembrane segments (helical) span residues 45–65 and 66–86; these read WWYS…LGLP and FFMA…SWII. The Cytoplasmic segment spans residues 87 to 122; the sequence is TLYTLWQMVEMHEMVPGKRFDRYHELGQFAFGERLG. The helical transmembrane segment at 123 to 143 threads the bilayer; sequence LYIIVPQQIIVEVGVCIVYMV. Residues 144 to 164 lie on the Extracellular side of the membrane; that stretch reads TGGQSLKKFHEIACQDCSPIR. A helical membrane pass occupies residues 165–185; that stretch reads LSFFIMIFASSHFVLSHLPNF. Topologically, residues 186–187 are cytoplasmic; that stretch reads NS. Residues 188 to 208 form a helical membrane-spanning segment; sequence ISGVSLVAAVMSLSYSTIAWT. At 209–231 the chain is on the extracellular side; the sequence is ATAAKGVQEDVQYGYKSGTTAST. Residues 232 to 252 form a helical membrane-spanning segment; the sequence is VLSFFTGLGGIAFAYAGHNVV. Over 253 to 276 the chain is Cytoplasmic; sequence LEIQATIPSTPSNPSKGPMWRGVV. Residues 277–297 form a helical membrane-spanning segment; the sequence is VAYVVVALCYFPVALVGYGVF. Over 298-318 the chain is Extracellular; the sequence is GNAVLDNVLMSLETPVWAIAT. A helical membrane pass occupies residues 319 to 339; that stretch reads ANLFVVMHVIGSYQIFAMPVF. Residues 340–359 lie on the Cytoplasmic side of the membrane; the sequence is DMVETFLVKKLNFKPSTVLR. Residues 360-382 traverse the membrane as a helical segment; the sequence is FIVRNVYVALTMFIGIMIPFFGG. Residues 383–385 lie on the Extracellular side of the membrane; that stretch reads LLA. Residues 386–408 traverse the membrane as a helical segment; it reads FFGGFAFAPTSYFLPCIMWLLIY. The Cytoplasmic segment spans residues 409–412; it reads KPKR. A helical transmembrane segment spans residues 413–433; the sequence is FSLSWWTNWVCIVLGVVLMIL. At 434–453 the chain is on the extracellular side; sequence SSIGGLRQIIIQSKDYSFFS.

It belongs to the amino acid/polyamine transporter 2 family. Amino acid/auxin permease (AAAP) (TC 2.A.18.2) subfamily.

Its subcellular location is the cell membrane. Functionally, amino acid transporter. This chain is Lysine histidine transporter-like 1, found in Arabidopsis thaliana (Mouse-ear cress).